A 457-amino-acid chain; its full sequence is BAG family molecular chaperone regulator 4 (457 aa).

Low complexity predominate over residues 1 to 20; sequence MSALRRSGYGPSDGPSYGRY. The tract at residues 1 to 104 is disordered; the sequence is MSALRRSGYG…PYPGYNSNYW (104 aa). A Phosphoserine modification is found at Ser-7. Residues 31-48 are compositionally biased toward pro residues; that stretch reads HVPPPLYPPLRPEPPQPP. Omega-N-methylarginine is present on residues Arg-41, Arg-54, Arg-108, and Arg-185. 2 disordered regions span residues 128-335 and 348-374; these read LNSY…SDLL and YGNA…SSDE. Positions 160 to 193 are enriched in polar residues; it reads YTQSNYSTEVPNTYRSPGNSPTPMSRWMYSQQDC. Over residues 255-268 the composition is skewed to low complexity; sequence PWPSAAPSAPSAGS. Positions 284–295 are enriched in pro residues; sequence PQPPPSPPPQQP. Polar residues-rich tracts occupy residues 326–335 and 348–365; these read AVNNDNSDLL and YGNA…SNNL. Residues 379–456 form the BAG domain; it reads SIKKIIHVLE…AILEKLEKKG (78 aa).

Binds to the ATPase domain of HSP/HSC70 chaperones. Binds to the death domain of TNFRSF12. Binds to the death domain of TNFRSF1A in the absence of TNF and thereby prevents binding of adapter molecules such as TRADD or TRAF2. Interacts with PRKN.

The protein resides in the cytoplasm. In terms of biological role, inhibits the chaperone activity of HSP70/HSC70 by promoting substrate release. Prevents constitutive TNFRSF1A signaling. Negative regulator of PRKN translocation to damaged mitochondria. In Mus musculus (Mouse), this protein is BAG family molecular chaperone regulator 4 (Bag4).